We begin with the raw amino-acid sequence, 255 residues long: Zinc-finger homeodomain protein 6 (255 aa).

Positions 1–35 (MEFRGHDEPVDEMGVAYGRTPPSSSSSPAASASAG) are disordered. The segment covering 21 to 35 (PPSSSSSPAASASAG) has biased composition (low complexity). The segment at 45–93 (YHECLRNHAAAMGGHVVDGCREFMPMPGDAADALKCAACGCHRSFHRKD) adopts a ZF-HD dimerization-type; degenerate zinc-finger fold. Residues 106–126 (PSPPTPRVPLLMPPPQPQPHP) are compositionally biased toward pro residues. Disordered stretches follow at residues 106 to 181 (PSPP…KFTP) and 226 to 255 (NNKSSIGSSSGGGSRRQPQEQQSQQQQQQQ). Residues 139 to 153 (YHHTPSGSGGTTTES) show a composition bias toward low complexity. A DNA-binding region (homeobox) is located at residues 172–235 (RKRFRTKFTP…NNKSSIGSSS (64 aa)). Low complexity predominate over residues 240–255 (RRQPQEQQSQQQQQQQ).

Homo- and heterodimer with other ZFHD proteins.

The protein resides in the nucleus. In terms of biological role, putative transcription factor. The chain is Zinc-finger homeodomain protein 6 (ZHD6) from Oryza sativa subsp. japonica (Rice).